A 736-amino-acid polypeptide reads, in one-letter code: uncharacterized protein (736 aa).

2 ABC transporter domains span residues 183–459 (IKID…KQME) and 518–734 (LQMS…TMTI). Residues 215–222 (GRNGIGKS) and 551–558 (GPNGAGKS) each bind ATP.

It belongs to the ABC transporter superfamily.

The protein resides in the cytoplasm. This is an uncharacterized protein from Schizosaccharomyces pombe (strain 972 / ATCC 24843) (Fission yeast).